We begin with the raw amino-acid sequence, 562 residues long: Serine/threonine-protein kinase STN7, chloroplastic (562 aa).

The transit peptide at 1–45 directs the protein to the chloroplast; that stretch reads MATISPGGAYIGTPSPFLGKKLKPFSLTSPILSFKPTVKLNSSCR. Residues 134-452 enclose the Protein kinase domain; the sequence is FVVGKKLGEG…AKAALAHPYF (319 aa). ATP-binding positions include 140–148 and lysine 167; that span reads LGEGSFGVV. The active-site Proton acceptor is the aspartate 279. At serine 526 the chain carries Phosphoserine. A phosphothreonine mark is found at threonine 537 and threonine 541.

It belongs to the protein kinase superfamily. Ser/Thr protein kinase family. Post-translationally, phosphorylated.

The protein resides in the plastid. It is found in the chloroplast thylakoid membrane. It catalyses the reaction L-seryl-[protein] + ATP = O-phospho-L-seryl-[protein] + ADP + H(+). The catalysed reaction is L-threonyl-[protein] + ATP = O-phospho-L-threonyl-[protein] + ADP + H(+). Serine/threonine protein kinase required for state transition by phosphorylating light-harvesting complex II outer antennae (LCHII). State transition plays a central role in response to environmental changes and allows to adjust to changing light conditions via the redistribution of light excitation energy between photosystem II (PSII) and photosystem I (PSI). Phosphorylates the minor light harvesting protein LHCB4.2/CP29 and is involved in the light-dependent phosphorylation of TSP9. Acts as a key component of the long-term response (LTR) signaling pathway. Mediates phosphorylation-dependent PTAC16 subcellular localization to regulate plastid gene expression. This Arabidopsis thaliana (Mouse-ear cress) protein is Serine/threonine-protein kinase STN7, chloroplastic (STN7).